Here is a 711-residue protein sequence, read N- to C-terminus: Polyribonucleotide nucleotidyltransferase (711 aa).

Mg(2+)-binding residues include D486 and D492. The region spanning 553–612 (PRIHTIKINPDKIKDVIGKGGSVIRALTEETGTTIEIEDDGTVKIAATDGEKAKHAIRRI) is the KH domain. The region spanning 622–690 (GRVYTGKVTR…RQGRIRLSIK (69 aa)) is the S1 motif domain. Residues 689–711 (IKEATEQSQPAAAPEAPAAEQGE) are disordered. Positions 694-711 (EQSQPAAAPEAPAAEQGE) are enriched in low complexity.

It belongs to the polyribonucleotide nucleotidyltransferase family. In terms of assembly, component of the RNA degradosome, which is a multiprotein complex involved in RNA processing and mRNA degradation. The cofactor is Mg(2+).

The protein localises to the cytoplasm. The enzyme catalyses RNA(n+1) + phosphate = RNA(n) + a ribonucleoside 5'-diphosphate. Functionally, involved in mRNA degradation. Catalyzes the phosphorolysis of single-stranded polyribonucleotides processively in the 3'- to 5'-direction. This is Polyribonucleotide nucleotidyltransferase from Shigella boydii serotype 4 (strain Sb227).